The primary structure comprises 87 residues: Omega-lycotoxin-Am1g (87 aa).

Residues 1 to 17 (MKLSIFFVLFFIAIAYC) form the signal peptide. A propeptide spanning residues 18 to 40 (QPEFLDDEEDEVEETLPVAEEGR) is cleaved from the precursor. Disulfide bonds link cysteine 44/cysteine 59, cysteine 51/cysteine 64, cysteine 58/cysteine 84, and cysteine 66/cysteine 82.

This sequence belongs to the neurotoxin omega-lctx family. In terms of tissue distribution, expressed by the venom gland.

Its subcellular location is the secreted. Modulates Cav2.1/CACNA1A voltage-gated calcium channels (P/Q-type currents) in rat cerebellar Purkinje cells and hippocampal CA1-CA3 neurons. At saturating concentrations (&gt;10 nM) decelerates activation kinetics and slightly increases peak amplitude without affecting deactivation kinetics. In vivo, does not cause death when intravenously injected into mice. In rat models, through its activity on Cav2.1/CACNA1A, has an ameliorative effect on memory defects provoked by hyperstimulation of N-methyl-D-aspartate receptors (NMDARs) in the hippocampus. This chain is Omega-lycotoxin-Am1g, found in Alopecosa marikovskyi (Wolf spider).